Reading from the N-terminus, the 444-residue chain is Glutamyl-tRNA reductase (444 aa).

Residues 49-52, S109, 114-116, and Q120 contribute to the substrate site; these read TCNR and ETQ. C50 (nucleophile) is an active-site residue. 189 to 194 provides a ligand contact to NADP(+); sequence GAGKMG.

The protein belongs to the glutamyl-tRNA reductase family. Homodimer.

It catalyses the reaction (S)-4-amino-5-oxopentanoate + tRNA(Glu) + NADP(+) = L-glutamyl-tRNA(Glu) + NADPH + H(+). The protein operates within porphyrin-containing compound metabolism; protoporphyrin-IX biosynthesis; 5-aminolevulinate from L-glutamyl-tRNA(Glu): step 1/2. In terms of biological role, catalyzes the NADPH-dependent reduction of glutamyl-tRNA(Glu) to glutamate 1-semialdehyde (GSA). This Bacillus cereus (strain ZK / E33L) protein is Glutamyl-tRNA reductase.